The primary structure comprises 257 residues: Triosephosphate isomerase (257 aa).

Asparagine 11 and lysine 13 together coordinate substrate. Histidine 96 (electrophile) is an active-site residue. Glutamate 170 (proton acceptor) is an active-site residue.

The protein belongs to the triosephosphate isomerase family. Homodimer.

It is found in the cytoplasm. It carries out the reaction D-glyceraldehyde 3-phosphate = dihydroxyacetone phosphate. The catalysed reaction is dihydroxyacetone phosphate = methylglyoxal + phosphate. The protein operates within carbohydrate biosynthesis; gluconeogenesis. Its pathway is carbohydrate degradation; glycolysis; D-glyceraldehyde 3-phosphate from glycerone phosphate: step 1/1. Functionally, triosephosphate isomerase is an extremely efficient metabolic enzyme that catalyzes the interconversion between dihydroxyacetone phosphate (DHAP) and D-glyceraldehyde-3-phosphate (G3P) in glycolysis and gluconeogenesis. In terms of biological role, it is also responsible for the non-negligible production of methylglyoxal a reactive cytotoxic side-product that modifies and can alter proteins, DNA and lipids. The polypeptide is Triosephosphate isomerase (Giardia intestinalis (Giardia lamblia)).